A 158-amino-acid polypeptide reads, in one-letter code: Transcriptional repressor NrdR (158 aa).

Residues 3–34 (CPSCQNTDSRVLESRAAEGGRSVRRRRECLNC) fold into a zinc finger. In terms of domain architecture, ATP-cone spans 49-139 (ITVIKRNGHR…VYRHFRSVSD (91 aa)).

The protein belongs to the NrdR family. The cofactor is Zn(2+).

Negatively regulates transcription of bacterial ribonucleotide reductase nrd genes and operons by binding to NrdR-boxes. This chain is Transcriptional repressor NrdR, found in Synechococcus sp. (strain CC9311).